A 70-amino-acid polypeptide reads, in one-letter code: DNA-directed RNA polymerase subunit epsilon (70 aa).

This sequence belongs to the RNA polymerase subunit epsilon family. RNAP is composed of a core of 2 alpha, a beta and a beta' subunit. The core is associated with a delta subunit, and at least one of epsilon or omega. When a sigma factor is associated with the core the holoenzyme is formed, which can initiate transcription.

It carries out the reaction RNA(n) + a ribonucleoside 5'-triphosphate = RNA(n+1) + diphosphate. In terms of biological role, a non-essential component of RNA polymerase (RNAP). In Leuconostoc mesenteroides subsp. mesenteroides (strain ATCC 8293 / DSM 20343 / BCRC 11652 / CCM 1803 / JCM 6124 / NCDO 523 / NBRC 100496 / NCIMB 8023 / NCTC 12954 / NRRL B-1118 / 37Y), this protein is DNA-directed RNA polymerase subunit epsilon.